The primary structure comprises 317 residues: 4-diphosphocytidyl-2-C-methyl-D-erythritol kinase (317 aa).

The active site involves lysine 11. Proline 99 to threonine 109 lines the ATP pocket. Aspartate 141 is a catalytic residue.

It belongs to the GHMP kinase family. IspE subfamily.

It catalyses the reaction 4-CDP-2-C-methyl-D-erythritol + ATP = 4-CDP-2-C-methyl-D-erythritol 2-phosphate + ADP + H(+). The protein operates within isoprenoid biosynthesis; isopentenyl diphosphate biosynthesis via DXP pathway; isopentenyl diphosphate from 1-deoxy-D-xylulose 5-phosphate: step 3/6. Its function is as follows. Catalyzes the phosphorylation of the position 2 hydroxy group of 4-diphosphocytidyl-2C-methyl-D-erythritol. This chain is 4-diphosphocytidyl-2-C-methyl-D-erythritol kinase, found in Nostoc sp. (strain PCC 7120 / SAG 25.82 / UTEX 2576).